A 265-amino-acid chain; its full sequence is UPF0294 protein KPK_4510 (265 aa).

It belongs to the UPF0294 family.

It is found in the cytoplasm. The polypeptide is UPF0294 protein KPK_4510 (Klebsiella pneumoniae (strain 342)).